The chain runs to 155 residues: Endoribonuclease YbeY (155 aa).

The Zn(2+) site is built by His120, His124, and His130.

This sequence belongs to the endoribonuclease YbeY family. Zn(2+) is required as a cofactor.

It localises to the cytoplasm. In terms of biological role, single strand-specific metallo-endoribonuclease involved in late-stage 70S ribosome quality control and in maturation of the 3' terminus of the 16S rRNA. This Staphylococcus epidermidis (strain ATCC 12228 / FDA PCI 1200) protein is Endoribonuclease YbeY.